The sequence spans 325 residues: Dehydrogenase/reductase SDR family member 7B (325 aa).

The Cytoplasmic portion of the chain corresponds to 1–17 (MISPSSRKGMLKERAMD). Residues 18–38 (LVTQTTILPLLFGCLGIFSLF) traverse the membrane as a helical; Signal-anchor for type II membrane protein segment. Over 39–325 (RLLQRTRSKA…ARKERKSKNS (287 aa)) the chain is Lumenal. The NAD(+) site is built by serine 62 and leucine 64. Serine 194 contacts substrate. Positions 207, 211, and 242 each coordinate NAD(+). Catalysis depends on tyrosine 207, which acts as the Proton acceptor.

It belongs to the short-chain dehydrogenases/reductases (SDR) family.

The protein resides in the endoplasmic reticulum membrane. Putative oxidoreductase. The protein is Dehydrogenase/reductase SDR family member 7B (Dhrs7b) of Rattus norvegicus (Rat).